Here is a 156-residue protein sequence, read N- to C-terminus: Small ribosomal subunit protein uS7 (156 aa).

In terms of assembly, part of the 30S ribosomal subunit. Contacts proteins S9 and S11.

Functionally, one of the primary rRNA binding proteins, it binds directly to 16S rRNA where it nucleates assembly of the head domain of the 30S subunit. Is located at the subunit interface close to the decoding center, probably blocks exit of the E-site tRNA. In Rhodopseudomonas palustris (strain ATCC BAA-98 / CGA009), this protein is Small ribosomal subunit protein uS7.